We begin with the raw amino-acid sequence, 401 residues long: Chalcone synthase 3 (401 aa).

Cysteine 168 is an active-site residue.

This sequence belongs to the thiolase-like superfamily. Chalcone/stilbene synthases family.

It catalyses the reaction (E)-4-coumaroyl-CoA + 3 malonyl-CoA + 3 H(+) = 2',4,4',6'-tetrahydroxychalcone + 3 CO2 + 4 CoA. It participates in secondary metabolite biosynthesis; flavonoid biosynthesis. The primary product of this enzyme is 4,2',4',6'-tetrahydroxychalcone (also termed naringenin-chalcone or chalcone) which can under specific conditions spontaneously isomerize into naringenin. In Sorghum bicolor (Sorghum), this protein is Chalcone synthase 3 (CHS3).